The sequence spans 173 residues: Shikimate kinase 1 (173 aa).

ATP is bound at residue G14–T19. Residue S18 participates in Mg(2+) binding. Positions 36, 60, and 82 each coordinate substrate. R120 serves as a coordination point for ATP. Residue R140 participates in substrate binding. Q157 contributes to the ATP binding site.

Belongs to the shikimate kinase family. Monomer. Requires Mg(2+) as cofactor.

The protein localises to the cytoplasm. The catalysed reaction is shikimate + ATP = 3-phosphoshikimate + ADP + H(+). Its pathway is metabolic intermediate biosynthesis; chorismate biosynthesis; chorismate from D-erythrose 4-phosphate and phosphoenolpyruvate: step 5/7. Its function is as follows. Catalyzes the specific phosphorylation of the 3-hydroxyl group of shikimic acid using ATP as a cosubstrate. In Salmonella typhimurium (strain LT2 / SGSC1412 / ATCC 700720), this protein is Shikimate kinase 1.